The following is a 258-amino-acid chain: Envelope glycoprotein L (258 aa).

An N-terminal signal peptide occupies residues 1–31 (MYECMFFSHRLTIGFYIPLIVLTTMSSLSES). The gL betaherpesvirus-type domain maps to 36–243 (QKTACTVAAI…ILYQASLSGP (208 aa)). Cysteines 145 and 150 form a disulfide.

The protein belongs to the herpesviridae glycoprotein L (gL) family. Betaherpesvirinae gL subfamily. In terms of assembly, interacts with glycoprotein H (gH); this interaction is necessary for the correct processing and cell surface expression of gH. Forms the envelope pentamer complex (PC) composed of gH, gL, UL128, UL130, and UL131A. The pentamer interacts with host NRP2. Forms the envelope trimer complex composed of gH, gL, and gO. The trimer interacts with host PDGFRA.

It is found in the virion membrane. Its subcellular location is the host cell membrane. It localises to the host Golgi apparatus. The protein resides in the host trans-Golgi network. Its function is as follows. The heterodimer glycoprotein H-glycoprotein L is required for the fusion of viral and plasma membranes leading to virus entry into the host cell. Acts as a functional inhibitor of gH and maintains gH in an inhibited form. Upon binding to host integrins, gL dissociates from gH leading to activation of the viral fusion glycoproteins gB and gH. In human cytomegalovirus, forms two distincts complexes to mediate viral entry, a trimer and a pentamer at the surface of the virion envelope. The gH-gL-gO trimer is required for infection in fibroblasts by interacting with host PDGFRA. The gH-gL-UL128-UL130-UL131A pentamer is essential for viral entry in epithelial, endothelial and myeloid cells via interaction with host NRP2. The sequence is that of Envelope glycoprotein L from Guinea pig cytomegalovirus (strain 22122) (GPCMV).